Here is a 104-residue protein sequence, read N- to C-terminus: Large ribosomal subunit protein uL24 (104 aa).

Belongs to the universal ribosomal protein uL24 family. As to quaternary structure, part of the 50S ribosomal subunit.

One of two assembly initiator proteins, it binds directly to the 5'-end of the 23S rRNA, where it nucleates assembly of the 50S subunit. Its function is as follows. One of the proteins that surrounds the polypeptide exit tunnel on the outside of the subunit. In Rhodopseudomonas palustris (strain BisB5), this protein is Large ribosomal subunit protein uL24.